A 638-amino-acid polypeptide reads, in one-letter code: Phosphomethylpyrimidine synthase (638 aa).

Substrate is bound by residues Asn-236, Met-265, Tyr-294, His-330, 350–352, 391–394, and Glu-430; these read SRG and DGLR. Residue His-434 coordinates Zn(2+). Tyr-457 lines the substrate pocket. His-498 is a binding site for Zn(2+). Residues Cys-578, Cys-581, and Cys-586 each contribute to the [4Fe-4S] cluster site.

The protein belongs to the ThiC family. In terms of assembly, homodimer. Requires [4Fe-4S] cluster as cofactor.

It carries out the reaction 5-amino-1-(5-phospho-beta-D-ribosyl)imidazole + S-adenosyl-L-methionine = 4-amino-2-methyl-5-(phosphooxymethyl)pyrimidine + CO + 5'-deoxyadenosine + formate + L-methionine + 3 H(+). The protein operates within cofactor biosynthesis; thiamine diphosphate biosynthesis. Catalyzes the synthesis of the hydroxymethylpyrimidine phosphate (HMP-P) moiety of thiamine from aminoimidazole ribotide (AIR) in a radical S-adenosyl-L-methionine (SAM)-dependent reaction. This chain is Phosphomethylpyrimidine synthase, found in Polaromonas sp. (strain JS666 / ATCC BAA-500).